Reading from the N-terminus, the 418-residue chain is Tyrosine--tRNA ligase (418 aa).

Tyr34 is an L-tyrosine binding site. Residues 39-48 carry the 'HIGH' region motif; that stretch reads PTADSLHLGH. Tyr169 and Gln173 together coordinate L-tyrosine. Residues 229–233 carry the 'KMSKS' region motif; it reads KFGKS. Residue Lys232 participates in ATP binding. The S4 RNA-binding domain occupies 352 to 418; the sequence is LNLVDMLVTA…GKKKYAVLTY (67 aa).

The protein belongs to the class-I aminoacyl-tRNA synthetase family. TyrS type 1 subfamily. In terms of assembly, homodimer.

It is found in the cytoplasm. It catalyses the reaction tRNA(Tyr) + L-tyrosine + ATP = L-tyrosyl-tRNA(Tyr) + AMP + diphosphate + H(+). In terms of biological role, catalyzes the attachment of tyrosine to tRNA(Tyr) in a two-step reaction: tyrosine is first activated by ATP to form Tyr-AMP and then transferred to the acceptor end of tRNA(Tyr). In Streptococcus pyogenes serotype M3 (strain SSI-1), this protein is Tyrosine--tRNA ligase.